Reading from the N-terminus, the 274-residue chain is MAD2L1-binding protein (274 aa).

Residues 45-78 form an interaction with MAD2L1 region; that stretch reads ASEAFCPRDCMVPVVFPGPVSQEGCCQFTCELLK. A Phosphoserine modification is found at serine 102.

It belongs to the MAD2L1BP family. Interacts with MAD2L1.

It localises to the nucleus. The protein resides in the cytoplasm. The protein localises to the cytoskeleton. Its subcellular location is the spindle. In terms of biological role, may function to silence the spindle checkpoint and allow mitosis to proceed through anaphase by binding MAD2L1 after it has become dissociated from the MAD2L1-CDC20 complex. In Homo sapiens (Human), this protein is MAD2L1-binding protein (MAD2L1BP).